The sequence spans 1783 residues: uncharacterized protein (1783 aa).

A helical membrane pass occupies residues 16 to 36 (FFLLFGIIFVLFSIIFLETSI). A compositionally biased stretch (low complexity) spans 105 to 119 (GSDSGQSNGSGDNQN). The tract at residues 105-125 (GSDSGQSNGSGDNQNKTIPRK) is disordered. Helical transmembrane passes span 917–937 (VSTV…ILLI), 967–987 (VFAG…AFLL), 1010–1030 (WLSF…ISWI), 1084–1104 (LFTY…AGTI), 1660–1680 (FLLG…GISM), 1709–1729 (FIPA…GVLI), 1730–1750 (GIQA…FEFL), and 1752–1772 (YMVG…YFWI).

The protein belongs to the ABC-4 integral membrane protein family.

The protein resides in the cell membrane. This is an uncharacterized protein from Mycoplasma genitalium (strain ATCC 33530 / DSM 19775 / NCTC 10195 / G37) (Mycoplasmoides genitalium).